Here is a 438-residue protein sequence, read N- to C-terminus: Plasmalemma vesicle-associated protein (438 aa).

The Cytoplasmic portion of the chain corresponds to 1–26; that stretch reads MGLSMDRSPYSRTGDRDRGCWYYLRY. A helical; Signal-anchor for type II membrane protein transmembrane segment spans residues 27–47; the sequence is FFLFVSLIQFLIILGLVLFMI. The Extracellular segment spans residues 48 to 438; the sequence is YGNVHATTES…LVNPAVPPSG (391 aa). Residues Asn-82, Asn-88, Asn-112, and Asn-150 are each glycosylated (N-linked (GlcNAc...) asparagine). Residues 289 to 383 are a coiled coil; it reads AGIERVTREN…TEVDVRISAL (95 aa). The tract at residues 393 to 438 is disordered; the sequence is PAIQPRLPGPPPNPPPIDPASLEEFKKRILESQRPPLVNPAVPPSG. Pro residues-rich tracts occupy residues 399–410 and 429–438; these read LPGPPPNPPPID and LVNPAVPPSG.

In terms of assembly, homodimer. As to expression, expressed in lung (alveolar endothelial and bronchial epithelial cells), kidney (endothelium of peritubular capillaries), spleen, liver, adrenal (endothelial cells of the zona reticularis of the cortex and chromaffin cells in the medulla), pancreas (islets of Langerhans), testis (germ cells, interstitial cells in neonatal testis and spermatids), ovary (stromal endothelial, thecal layer of developing follicles, luteal cells within the corpus luteum), intestine (endothelium of capillaries of the intestinal villi) and pituitary (pituicyte cells in the neural lobe) (at protein level). Expressed in lung, kidney, spleen, liver, adrenal, testis, heart, muscle, pituitary, thyroid and ovary.

It localises to the cell membrane. The protein localises to the membrane. It is found in the caveola. Its subcellular location is the cytoplasm. The protein resides in the perinuclear region. Its function is as follows. Endothelial cell-specific membrane protein involved in the formation of the diaphragms that bridge endothelial fenestrae. It is also required for the formation of stomata of caveolae and transendothelial channels. Functions in microvascular permeability, endothelial fenestrae contributing to the passage of water and solutes and regulating transcellular versus paracellular flow in different organs. Plays a specific role in embryonic development. The sequence is that of Plasmalemma vesicle-associated protein (Plvap) from Rattus norvegicus (Rat).